A 237-amino-acid polypeptide reads, in one-letter code: MNIQHNLNLIQQKIETACKEENRNQNTVKLLAVSKTKPISAILSAYQAGQTAFGENYVQEGVEKIQYFESQGINLEWHFIGPLQSNKTRLVAEHFDWMQTLDRAKIADRLNEQRPTNKAPLNVLIQINISDEESKSGIQPEEMLTLAKHIENLPHLCLRGLMAIPAPTDNIAEQENAFRKMLELFEQLKQVLPNQQIDTLSMGMTDDMPSAIKCGSTMVRIGTAIFGARNYSTSQNK.

An N6-(pyridoxal phosphate)lysine modification is found at Lys-35.

The protein belongs to the pyridoxal phosphate-binding protein YggS/PROSC family.

Its function is as follows. Pyridoxal 5'-phosphate (PLP)-binding protein, which is involved in PLP homeostasis. This Haemophilus influenzae (strain ATCC 51907 / DSM 11121 / KW20 / Rd) protein is Pyridoxal phosphate homeostasis protein.